The primary structure comprises 582 residues: Urocanate reductase (582 aa).

A signal peptide spans 1–20 (MHYKKSIIGIAVTATAIIAG). The N-palmitoyl cysteine moiety is linked to residue cysteine 21. A lipid anchor (S-diacylglycerol cysteine) is attached at cysteine 21. Threonine 93 bears the FMN phosphoryl threonine mark. FAD is bound by residues alanine 143, glutamate 162, asparagine 170, serine 171, glycine 175, alanine 176, alanine 285, and aspartate 352. Catalysis depends on arginine 411, which acts as the Proton donor. Residues histidine 521, glutamate 550, and alanine 565 each coordinate FAD.

This sequence belongs to the FAD-dependent oxidoreductase 2 family. FRD/SDH subfamily. FAD serves as cofactor. Requires FMN as cofactor.

It localises to the cell membrane. It carries out the reaction dihydrourocanate + A = urocanate + AH2. Catalyzes the two-electron reduction of urocanate to dihydrourocanate (also named imidazole propionate or deamino-histidine). The physiological electron donor is unknown; it might be the membrane-bound tetraheme cytochrome c (CymA). Enables anaerobic growth with urocanate as a sole terminal electron acceptor, and thus can provide the cells with a niche where no other bacteria can compete and survive. Is unable to reduce cinnamate and other unsaturated organic acids such as acrylic, crotonic, fumaric and orotic acids. Has no fumarate reductase or succinate dehydrogenase activity. The protein is Urocanate reductase (urdA) of Shewanella oneidensis (strain ATCC 700550 / JCM 31522 / CIP 106686 / LMG 19005 / NCIMB 14063 / MR-1).